The following is a 339-amino-acid chain: Glycerol-3-phosphate dehydrogenase [NAD(P)+] (339 aa).

Residues serine 15, tyrosine 16, histidine 36, and lysine 110 each contribute to the NADPH site. Residues lysine 110, glycine 139, and threonine 141 each coordinate sn-glycerol 3-phosphate. NADPH is bound at residue alanine 143. Lysine 195, aspartate 248, serine 258, arginine 259, and asparagine 260 together coordinate sn-glycerol 3-phosphate. Lysine 195 functions as the Proton acceptor in the catalytic mechanism. Arginine 259 contacts NADPH. 2 residues coordinate NADPH: valine 283 and glutamate 285.

This sequence belongs to the NAD-dependent glycerol-3-phosphate dehydrogenase family.

The protein resides in the cytoplasm. It carries out the reaction sn-glycerol 3-phosphate + NAD(+) = dihydroxyacetone phosphate + NADH + H(+). The catalysed reaction is sn-glycerol 3-phosphate + NADP(+) = dihydroxyacetone phosphate + NADPH + H(+). The protein operates within membrane lipid metabolism; glycerophospholipid metabolism. Its function is as follows. Catalyzes the reduction of the glycolytic intermediate dihydroxyacetone phosphate (DHAP) to sn-glycerol 3-phosphate (G3P), the key precursor for phospholipid synthesis. The sequence is that of Glycerol-3-phosphate dehydrogenase [NAD(P)+] from Serratia proteamaculans (strain 568).